Here is a 400-residue protein sequence, read N- to C-terminus: 3-hydroxybenzoate 6-hydroxylase (400 aa).

This sequence belongs to the 3-hydroxybenzoate 6-hydroxylase family. Monomer. FAD is required as a cofactor.

It catalyses the reaction 3-hydroxybenzoate + NADH + O2 + H(+) = 2,5-dihydroxybenzoate + NAD(+) + H2O. Its function is as follows. Catalyzes the NAD- or NADP-dependent conversion of 3-hydroxybenzoate to gentisate. The affinity of the enzyme toward NAD is twice as high as for NADP. This Polaromonas naphthalenivorans (strain CJ2) protein is 3-hydroxybenzoate 6-hydroxylase (nagX).